Here is a 184-residue protein sequence, read N- to C-terminus: Bacterial microcompartment shell protein PduT (184 aa).

BMC domains lie at 4 to 86 (AIGI…PAIS) and 96 to 182 (AVGI…RQMV). Position 38 (Cys-38) interacts with [4Fe-4S] cluster.

This sequence belongs to the bacterial microcompartments protein family. In terms of assembly, homotrimerizes to form a pseudohexamer with a large central pore, which is probably the binding site for the [4Fe-4S] center. Interacts with PduS. Originally suggested to be a homotetramer; this is incorrect. [4Fe-4S] cluster is required as a cofactor.

It is found in the bacterial microcompartment. It functions in the pathway polyol metabolism; 1,2-propanediol degradation. In terms of biological role, a minor shell protein of the bacterial microcompartment (BMC) dedicated to 1,2-propanediol (1,2-PD) degradation. Overexpression of this protein leads to cells with either deposits or having lamina-like structures in the cytoplasm. Not absolutely required to make artificial BMCs. May selectively transport specific metabolites. Its function is as follows. Expression of a cosmid containing the full 21-gene pdu operon in E.coli allows E.coli to grow on 1,2-propanediol (1,2-PD) with the appearance of bacterial microcompartments (BMC) in its cytoplasm. The 1,2-PD-specific bacterial microcompartment (BMC) concentrates low levels of 1,2-PD catabolic enzymes, concentrates volatile reaction intermediates thus enhancing pathway flux and keeps the level of toxic, mutagenic propionaldehyde low. In Citrobacter freundii, this protein is Bacterial microcompartment shell protein PduT.